The sequence spans 249 residues: DNA polymerase sliding clamp (249 aa).

Belongs to the PCNA family. In terms of assembly, homotrimer. The subunits circularize to form a toroid; DNA passes through its center. Replication factor C (RFC) is required to load the toroid on the DNA.

In terms of biological role, sliding clamp subunit that acts as a moving platform for DNA processing. Responsible for tethering the catalytic subunit of DNA polymerase and other proteins to DNA during high-speed replication. This chain is DNA polymerase sliding clamp, found in Pyrococcus horikoshii (strain ATCC 700860 / DSM 12428 / JCM 9974 / NBRC 100139 / OT-3).